A 213-amino-acid polypeptide reads, in one-letter code: Chloramphenicol acetyltransferase 2 (213 aa).

Histidine 189 (proton acceptor) is an active-site residue.

It belongs to the chloramphenicol acetyltransferase family. Homotrimer.

It catalyses the reaction chloramphenicol + acetyl-CoA = chloramphenicol 3-acetate + CoA. Its function is as follows. This enzyme is an effector of chloramphenicol resistance in bacteria. This chain is Chloramphenicol acetyltransferase 2 (cat-IIH), found in Haemophilus influenzae.